The primary structure comprises 253 residues: Probable glutathione transferase omega-2 (253 aa).

The GST N-terminal domain maps to 25 to 105; that stretch reads GIYRIYNMRF…YLDDLFPESR (81 aa). The Nucleophile role is filled by Cys35. Glutathione contacts are provided by residues Lys62, Val75, and 89–90; that span reads ES. Residues 110–238 form the GST C-terminal domain; it reads DPYEKVQQKL…SQPTEMGVGF (129 aa).

It belongs to the GST superfamily. Omega family.

The enzyme catalyses RX + glutathione = an S-substituted glutathione + a halide anion + H(+). The catalysed reaction is L-dehydroascorbate + 2 glutathione = glutathione disulfide + L-ascorbate. It carries out the reaction methylarsonate + 2 glutathione + H(+) = methylarsonous acid + glutathione disulfide + H2O. In terms of biological role, exhibits glutathione-dependent thiol transferase activity. Has dehydroascorbate reductase activity and may contribute to the recycling of ascorbic acid. Participates in the biotransformation of inorganic arsenic and reduces monomethylarsonic acid (MMA). This chain is Probable glutathione transferase omega-2, found in Caenorhabditis briggsae.